Here is a 278-residue protein sequence, read N- to C-terminus: HTH-type transcriptional activator RhaS (278 aa).

In terms of domain architecture, HTH araC/xylS-type spans 174-272 (NQLMAWLEDH…SWSPREIRQG (99 aa)). 2 DNA-binding regions (H-T-H motif) span residues 191–212 (ETVADVFSLSLRTLHRQLKQHT) and 239–262 (VTDIAYRCGFGDSNHFSTLFRREF).

In terms of assembly, binds DNA as a dimer.

The protein resides in the cytoplasm. Its function is as follows. Activates expression of the rhaBAD and rhaT operons. The chain is HTH-type transcriptional activator RhaS from Enterobacter sp. (strain 638).